A 540-amino-acid chain; its full sequence is Membrane protein insertase YidC (540 aa).

Residues 6–26 traverse the membrane as a helical segment; the sequence is NILLIALALVSFLLFQQWQVA. A compositionally biased stretch (low complexity) spans 36–47; that stretch reads QAQSSSSLPAPS. The interval 36-63 is disordered; that stretch reads QAQSSSSLPAPSFADELDPVPGQQQASA. Transmembrane regions (helical) follow at residues 342–362, 417–437, 455–475, and 496–516; these read AFIQSFVGNWGVAIICLTFIV, LGGCLPLVLQMPIFIALYWAL, LSAQDPYYILPLLMGASMFLI, and PVMFTFFFLFFPSGLVLYWLV.

This sequence belongs to the OXA1/ALB3/YidC family. Type 1 subfamily. In terms of assembly, interacts with the Sec translocase complex via SecD. Specifically interacts with transmembrane segments of nascent integral membrane proteins during membrane integration.

It is found in the cell inner membrane. Required for the insertion and/or proper folding and/or complex formation of integral membrane proteins into the membrane. Involved in integration of membrane proteins that insert both dependently and independently of the Sec translocase complex, as well as at least some lipoproteins. Aids folding of multispanning membrane proteins. The protein is Membrane protein insertase YidC of Vibrio parahaemolyticus serotype O3:K6 (strain RIMD 2210633).